Consider the following 304-residue polypeptide: Galactofuranosyltransferase GlfT1 (304 aa).

Belongs to the glycosyltransferase 2 family. As to quaternary structure, is probably part of an AG biosynthetic complex.

The protein localises to the cell membrane. Its subcellular location is the secreted. The protein resides in the cell wall. The catalysed reaction is alpha-L-rhamnosyl-(1-&gt;3)-N-acetyl-alpha-D-glucosaminyl-diphospho-trans,octa-cis-decaprenol + 2 UDP-alpha-D-galactofuranose = beta-D-galactofuranosyl-(1-&gt;5)-beta-D-galactofuranosyl-(1-&gt;4)-alpha-L-rhamnosyl-(1-&gt;3)-N-acetyl-alpha-D-glucosaminyl-diphospho-trans,octa-cis-decaprenol + 2 UDP + 2 H(+). It functions in the pathway cell wall biogenesis; cell wall polysaccharide biosynthesis. Its function is as follows. Involved in the biosynthesis of the arabinogalactan (AG) region of the mycolylarabinogalactan-peptidoglycan (mAGP) complex, an essential component of the mycobacterial cell wall. Catalyzes the transfer of the first two galactofuranosyl (Galf) units from UDP-galactofuranose (UDP-Galf) onto the rhamnosyl-GlcNAc-diphospho-decaprenol (Rha-GlcNAc-PP-C50) acceptor, yielding galactofuranosyl-galactofuranosyl-rhamnosyl-GlcNAc-diphospho-decaprenol (Galf-Galf-Rha-GlcNAc-PP-C50). Thus, GlfT1 is the initiator of galactan synthesis, while GlfT2 continues with the subsequent polymerization events. This Mycobacterium tuberculosis (strain CDC 1551 / Oshkosh) protein is Galactofuranosyltransferase GlfT1.